The chain runs to 127 residues: Aspartate 1-decarboxylase (127 aa).

Ser25 acts as the Schiff-base intermediate with substrate; via pyruvic acid in catalysis. A Pyruvic acid (Ser) modification is found at Ser25. Thr57 is a substrate binding site. Tyr58 acts as the Proton donor in catalysis. 73-75 serves as a coordination point for substrate; that stretch reads GAA.

The protein belongs to the PanD family. As to quaternary structure, heterooctamer of four alpha and four beta subunits. Requires pyruvate as cofactor. Post-translationally, is synthesized initially as an inactive proenzyme, which is activated by self-cleavage at a specific serine bond to produce a beta-subunit with a hydroxyl group at its C-terminus and an alpha-subunit with a pyruvoyl group at its N-terminus.

It localises to the cytoplasm. The catalysed reaction is L-aspartate + H(+) = beta-alanine + CO2. Its pathway is cofactor biosynthesis; (R)-pantothenate biosynthesis; beta-alanine from L-aspartate: step 1/1. Catalyzes the pyruvoyl-dependent decarboxylation of aspartate to produce beta-alanine. This is Aspartate 1-decarboxylase from Neisseria gonorrhoeae (strain ATCC 700825 / FA 1090).